Reading from the N-terminus, the 265-residue chain is Apolipoprotein A-I (265 aa).

The first 18 residues, 1-18 (MKAVVLTLAVLFLTGSQA), serve as a signal peptide directing secretion. 2 tandem repeats follow at residues 67–88 (LKLV…EHLG) and 89–110 (PVAQ…REIN). Residues 67-265 (LKLVDNWDTL…IDEAAKKLTA (199 aa)) form a 10 X approximate tandem repeats region. Residues 111–121 (KDLEDVRQKTQ) form a 3; half-length repeat. A run of 5 repeats spans residues 122 to 143 (PFLD…QKVE), 144 to 165 (PLSA…EQVT), 166 to 187 (PLGE…TQLA), 188 to 209 (PYSE…EGGS), and 210 to 231 (ASLA…EKAK). Methionine 193 is modified (methionine sulfoxide). A 9; half-length repeat occupies 232 to 242 (PVLEDIHQGLM). 2 positions are modified to methionine sulfoxide: methionine 242 and methionine 244. Repeat 10 spans residues 243–265 (PMWESFKTGVLNVIDEAAKKLTA).

The protein belongs to the apolipoprotein A1/A4/E family. In terms of assembly, homodimer. Interacts with APOA1BP and CLU. Component of a sperm activating protein complex (SPAP), consisting of APOA1, an immunoglobulin heavy chain, an immunoglobulin light chain and albumin. Interacts with NDRG1. Interacts with SCGB3A2. Interacts with NAXE and YJEFN3. Post-translationally, glycosylated. Palmitoylated. In terms of processing, phosphorylation sites are present in the extracellular medium. Major protein of plasma HDL, also found in chylomicrons.

The protein resides in the secreted. Participates in the reverse transport of cholesterol from tissues to the liver for excretion by promoting cholesterol efflux from tissues and by acting as a cofactor for the lecithin cholesterol acyltransferase (LCAT). As part of the SPAP complex, activates spermatozoa motility. The sequence is that of Apolipoprotein A-I (APOA1) from Tupaia belangeri (Common tree shrew).